Reading from the N-terminus, the 448-residue chain is Glucose-6-phosphate isomerase (448 aa).

Glu-290 functions as the Proton donor in the catalytic mechanism. Residues His-311 and Lys-425 contribute to the active site.

The protein belongs to the GPI family.

The protein localises to the cytoplasm. It catalyses the reaction alpha-D-glucose 6-phosphate = beta-D-fructose 6-phosphate. It functions in the pathway carbohydrate biosynthesis; gluconeogenesis. Its pathway is carbohydrate degradation; glycolysis; D-glyceraldehyde 3-phosphate and glycerone phosphate from D-glucose: step 2/4. In terms of biological role, catalyzes the reversible isomerization of glucose-6-phosphate to fructose-6-phosphate. This is Glucose-6-phosphate isomerase from Levilactobacillus brevis (strain ATCC 367 / BCRC 12310 / CIP 105137 / JCM 1170 / LMG 11437 / NCIMB 947 / NCTC 947) (Lactobacillus brevis).